An 883-amino-acid chain; its full sequence is Phosphoenolpyruvate carboxylase (883 aa).

Active-site residues include H138 and K546.

This sequence belongs to the PEPCase type 1 family. It depends on Mg(2+) as a cofactor.

The catalysed reaction is oxaloacetate + phosphate = phosphoenolpyruvate + hydrogencarbonate. Functionally, forms oxaloacetate, a four-carbon dicarboxylic acid source for the tricarboxylic acid cycle. This is Phosphoenolpyruvate carboxylase from Escherichia coli O127:H6 (strain E2348/69 / EPEC).